Consider the following 370-residue polypeptide: 4-hydroxy-3-methylbut-2-en-1-yl diphosphate synthase (flavodoxin) (370 aa).

Residues C270, C273, C305, and E312 each contribute to the [4Fe-4S] cluster site.

This sequence belongs to the IspG family. [4Fe-4S] cluster is required as a cofactor.

It carries out the reaction (2E)-4-hydroxy-3-methylbut-2-enyl diphosphate + oxidized [flavodoxin] + H2O + 2 H(+) = 2-C-methyl-D-erythritol 2,4-cyclic diphosphate + reduced [flavodoxin]. The protein operates within isoprenoid biosynthesis; isopentenyl diphosphate biosynthesis via DXP pathway; isopentenyl diphosphate from 1-deoxy-D-xylulose 5-phosphate: step 5/6. Functionally, converts 2C-methyl-D-erythritol 2,4-cyclodiphosphate (ME-2,4cPP) into 1-hydroxy-2-methyl-2-(E)-butenyl 4-diphosphate. The polypeptide is 4-hydroxy-3-methylbut-2-en-1-yl diphosphate synthase (flavodoxin) (Saccharophagus degradans (strain 2-40 / ATCC 43961 / DSM 17024)).